The chain runs to 222 residues: Phosphoribosylformylglycinamidine synthase subunit PurQ (222 aa).

Positions 3–222 (AAVVVFPGSN…RALAGALTPA (220 aa)) constitute a Glutamine amidotransferase type-1 domain. Residue Cys-86 is the Nucleophile of the active site. Residues His-194 and Glu-196 contribute to the active site.

Part of the FGAM synthase complex composed of 1 PurL, 1 PurQ and 2 PurS subunits.

The protein localises to the cytoplasm. The catalysed reaction is N(2)-formyl-N(1)-(5-phospho-beta-D-ribosyl)glycinamide + L-glutamine + ATP + H2O = 2-formamido-N(1)-(5-O-phospho-beta-D-ribosyl)acetamidine + L-glutamate + ADP + phosphate + H(+). It carries out the reaction L-glutamine + H2O = L-glutamate + NH4(+). It functions in the pathway purine metabolism; IMP biosynthesis via de novo pathway; 5-amino-1-(5-phospho-D-ribosyl)imidazole from N(2)-formyl-N(1)-(5-phospho-D-ribosyl)glycinamide: step 1/2. Its function is as follows. Part of the phosphoribosylformylglycinamidine synthase complex involved in the purines biosynthetic pathway. Catalyzes the ATP-dependent conversion of formylglycinamide ribonucleotide (FGAR) and glutamine to yield formylglycinamidine ribonucleotide (FGAM) and glutamate. The FGAM synthase complex is composed of three subunits. PurQ produces an ammonia molecule by converting glutamine to glutamate. PurL transfers the ammonia molecule to FGAR to form FGAM in an ATP-dependent manner. PurS interacts with PurQ and PurL and is thought to assist in the transfer of the ammonia molecule from PurQ to PurL. The chain is Phosphoribosylformylglycinamidine synthase subunit PurQ from Ruegeria pomeroyi (strain ATCC 700808 / DSM 15171 / DSS-3) (Silicibacter pomeroyi).